Here is a 310-residue protein sequence, read N- to C-terminus: 3,5-dioxohexanoate:acetyl-CoA acetone transferase (310 aa).

Positions 49, 51, and 258 each coordinate Zn(2+).

This sequence belongs to the BKACE family. Requires Zn(2+) as cofactor.

It catalyses the reaction 3,5-dioxohexanoate + acetyl-CoA = acetoacetyl-CoA + acetoacetate. In terms of biological role, catalyzes the condensation of 3,5-dioxohexanoate and acetyl-CoA, forming acetoacetate and acetoacetyl-CoA. May be involved in fatty acid biosynthesis rescue via triacetic acid lactone. This Paraburkholderia graminis (strain ATCC 700544 / DSM 17151 / LMG 18924 / NCIMB 13744 / C4D1M) protein is 3,5-dioxohexanoate:acetyl-CoA acetone transferase.